We begin with the raw amino-acid sequence, 79 residues long: Methionine-rich peptide X (79 aa).

The first 22 residues, 1–22, serve as a signal peptide directing secretion; it reads MKKLAAVMLTSCLMVAVGASFA. The interval 37–79 is disordered; it reads KKDDMAKDEMKKDSMAKDGMKKDAMKKDAMMKKDGMTKDEMKK.

Protein is oxidized (possibly on Met residues) when cells are exposed to chlorite or hypochlorite; initially the protein is highly oxidized, by 50 minutes all protein is in the reduced form.

Its subcellular location is the periplasm. Its function is as follows. Serves as an oxidative stress sink, specifically for chlorite and hypochlorite. This chain is Methionine-rich peptide X, found in Azospira oryzae (strain ATCC BAA-33 / DSM 13638 / PS) (Dechlorosoma suillum).